A 449-amino-acid chain; its full sequence is UNC93-like protein MFSD11 (449 aa).

The chain crosses the membrane as a helical span at residues 8-28 (LFNIIILGVAFMFMFTAFQTC). Residue N40 is glycosylated (N-linked (GlcNAc...) asparagine). The next 5 helical transmembrane spans lie at 53–73 (AIIY…VAIV), 74–94 (GPQL…AVFI), 96–116 (PFPW…AVLW), 138–158 (IFWA…YFAW), and 170–190 (RTVF…FFLI). Phosphoserine is present on S204. 6 helical membrane passes run 239–259 (MLLL…FSGV), 277–297 (LIGL…SLFG), 309–329 (PVVL…FLNM), 359–379 (FLLG…LGFL), 385–405 (APAF…AFFY), and 410–430 (LLHW…ISFF).

It belongs to the unc-93 family.

It localises to the membrane. In Homo sapiens (Human), this protein is UNC93-like protein MFSD11 (MFSD11).